The sequence spans 696 residues: MSVRGHAVRRRRASTRSHAPSAHRADSPVEDEPEGGGVGLMGYLRAVFNVDDDSEVEAAGEMASEEPPPRRRREARGHPGSRRASEARAAAPPRRASFPRPRSVTARSQSVRGRRDSAITRAPRGGYLGPMDPRDVLGRVGGSRVVPSPLFLDELNYEEDDYPAAVAHDDGPGARPSATVEILAGRVSGPELQAAFPLDRLTPRVAAWDESVRSALALGHPAGFYPCPDSAFGLSRVGVMHFASPADPKVFFRQTLQQGEALAWYVTGDAILDLTDRRAKTSPSRAMGFLVDAIVRVAINGWVCGTRLHTEGRGSELDDRAAELRRQFASLTALRPVGAAAVPLLSAGGAAPPHPGPDAAVFRSSLGSLLYWPGVRALLGRDCRVAARYAGRMTYIATGALLARFNPGAVKCVLPREAAFAGRVLDVLAVLAEQTVQWLSVVVGARLHPHSAHPAFADVEQEALFRALPLGSPGVVAAEHEALGDTAARRLLATSGLNAVLGAAVYALHTALATVTLKYALACGDARRRRDDAAAARAVLATGLILQRLLGLADTVVACVALAAFDGGSTAPEVGTYTPLRYACVLRATQPLYARTTPAKFWADVRAAAEHVDLRPASSAPRAPVSGTADPAFLLEDLAAFPPAPLNSESVLGPRVRVVDIMAQFRKLLMGDEETAALRAHVSGRRATGLGGPPRP.

2 stretches are compositionally biased toward basic residues: residues 1 to 15 and 70 to 81; these read MSVR…RAST and RRRREARGHPGS. 2 disordered regions span residues 1-39 and 54-130; these read MSVR…GGVG and SEVE…YLGP. Residues 57 to 84 are RNA-binding; the sequence is EAAGEMASEEPPPRRRREARGHPGSRRA. Residues 70-84 carry the Nuclear localization signal motif; the sequence is RRRREARGHPGSRRA. The span at 87 to 103 shows a compositional bias: low complexity; the sequence is ARAAAPPRRASFPRPRS. Positions 650–673 match the Nuclear export signal motif; sequence SVLGPRVRVVDIMAQFRKLLMGDE.

The protein belongs to the alphaherpesvirinae HHV-1 UL47 family. Interacts with US3 kinase. Interacts with UL31 and UL34; these interactions seem important for efficient virion nuclear egress. Interacts with UL41/VHS. Phosphorylated by US3. This phosphorylation is required for proper nuclear localization.

It is found in the virion tegument. It localises to the host nucleus. The protein localises to the host cytoplasm. Functionally, tegument protein that can bind to various RNA transcripts. Plays a role in the attenuation of selective viral and cellular mRNA degradation by modulating the activity of host shutoff RNase UL41/VHS. Also plays a role in the primary envelopment of virions in the perinuclear space, probably by interacting with two nuclear egress proteins UL31 and UL34. In Human herpesvirus 2 (strain HG52) (HHV-2), this protein is Tegument protein UL47.